The chain runs to 349 residues: Probable L-asparaginase periplasmic (349 aa).

Positions 1–21 (MKLTKLALCTLFGLGVSIANA) are cleaved as a signal peptide. The Asparaginase/glutaminase domain occupies 25–349 (PNITILATGG…KVIQQYFEDF (325 aa)). Catalysis depends on Thr35, which acts as the O-isoaspartyl threonine intermediate. Residues Ser81 and 112 to 113 (TD) each bind substrate. A disulfide bond links Cys100 and Cys128.

It belongs to the asparaginase 1 family.

The protein localises to the periplasm. The catalysed reaction is L-asparagine + H2O = L-aspartate + NH4(+). In Haemophilus influenzae (strain ATCC 51907 / DSM 11121 / KW20 / Rd), this protein is Probable L-asparaginase periplasmic (ansB).